Reading from the N-terminus, the 267-residue chain is Membrane-spanning 4-domains subfamily A member 12 (267 aa).

The Cytoplasmic segment spans residues Met1–Leu91. A helical membrane pass occupies residues Gly92–Ile112. Topologically, residues Ser113–Leu120 are extracellular. A helical membrane pass occupies residues Gly121–Ile141. The Cytoplasmic portion of the chain corresponds to Ser142–Gly160. The helical transmembrane segment at Ser161–Val181 threads the bilayer. At Asp182–Lys200 the chain is on the extracellular side. A helical membrane pass occupies residues Gly201–Ala221. Residues His222–Lys267 are Cytoplasmic-facing. Residues Thr248–Lys267 are disordered.

It belongs to the MS4A family.

The protein resides in the membrane. Its function is as follows. May be involved in signal transduction as a component of a multimeric receptor complex. The sequence is that of Membrane-spanning 4-domains subfamily A member 12 (MS4A12) from Homo sapiens (Human).